The primary structure comprises 339 residues: Phosphoribosylformylglycinamidine cyclo-ligase (339 aa).

Belongs to the AIR synthase family.

It localises to the cytoplasm. It catalyses the reaction 2-formamido-N(1)-(5-O-phospho-beta-D-ribosyl)acetamidine + ATP = 5-amino-1-(5-phospho-beta-D-ribosyl)imidazole + ADP + phosphate + H(+). The protein operates within purine metabolism; IMP biosynthesis via de novo pathway; 5-amino-1-(5-phospho-D-ribosyl)imidazole from N(2)-formyl-N(1)-(5-phospho-D-ribosyl)glycinamide: step 2/2. The sequence is that of Phosphoribosylformylglycinamidine cyclo-ligase from Fusobacterium nucleatum subsp. nucleatum (strain ATCC 25586 / DSM 15643 / BCRC 10681 / CIP 101130 / JCM 8532 / KCTC 2640 / LMG 13131 / VPI 4355).